A 520-amino-acid polypeptide reads, in one-letter code: Probable kinase 098L (520 aa).

The 312-residue stretch at 82-393 (LTSVQSFGSK…NSPLLKKGFV (312 aa)) folds into the Protein kinase domain. Residues 88 to 96 (FGSKSKQGI) and K111 contribute to the ATP site. D205 acts as the Proton acceptor in catalysis. Residues 416–442 (QTAQLIETDKEILDNLIDDLELKIVRK) adopt a coiled-coil conformation.

This sequence belongs to the protein kinase superfamily.

In terms of biological role, probable kinase. The sequence is that of Probable kinase 098L from Aedes vexans (Inland floodwater mosquito).